Consider the following 122-residue polypeptide: uncharacterized protein (122 aa).

Phosphothreonine is present on Thr55. Residues Ser72, Ser86, Ser96, Ser112, and Ser118 each carry the phosphoserine modification.

The protein localises to the cytoplasm. This is an uncharacterized protein from Homo sapiens (Human).